The following is a 448-amino-acid chain: Squalene synthase ERG9 (448 aa).

The chain crosses the membrane as a helical span at residues 420–440; that stretch reads RIEPGNFNCNVVLFGIGALIL.

It belongs to the phytoene/squalene synthase family. The cofactor is Mg(2+).

The protein localises to the endoplasmic reticulum membrane. It is found in the microsome. The enzyme catalyses 2 (2E,6E)-farnesyl diphosphate + NADPH + H(+) = squalene + 2 diphosphate + NADP(+). The catalysed reaction is 2 (2E,6E)-farnesyl diphosphate + NADH + H(+) = squalene + 2 diphosphate + NAD(+). It participates in terpene metabolism; lanosterol biosynthesis; lanosterol from farnesyl diphosphate: step 1/3. Its function is as follows. Squalene synthase; part of the third module of ergosterol biosynthesis pathway that includes the late steps of the pathway. ERG9 produces squalene from 2 farnesyl pyrophosphate moieties. The third module or late pathway involves the ergosterol synthesis itself through consecutive reactions that mainly occur in the endoplasmic reticulum (ER) membrane. Firstly, the squalene synthase ERG9 catalyzes the condensation of 2 farnesyl pyrophosphate moieties to form squalene, which is the precursor of all steroids. Squalene synthase is crucial for balancing the incorporation of farnesyl diphosphate (FPP) into sterol and nonsterol isoprene synthesis. Secondly, the squalene epoxidase ERG1 catalyzes the stereospecific oxidation of squalene to (S)-2,3-epoxysqualene, which is considered to be a rate-limiting enzyme in steroid biosynthesis. Then, the lanosterol synthase ERG7 catalyzes the cyclization of (S)-2,3 oxidosqualene to lanosterol, a reaction that forms the sterol core. In the next steps, lanosterol is transformed to zymosterol through a complex process involving various demethylation, reduction and desaturation reactions. The lanosterol 14-alpha-demethylase ERG11 (also known as CYP51) catalyzes C14-demethylation of lanosterol to produce 4,4'-dimethyl cholesta-8,14,24-triene-3-beta-ol, which is critical for ergosterol biosynthesis. The C-14 reductase ERG24 reduces the C14=C15 double bond of 4,4-dimethyl-cholesta-8,14,24-trienol to produce 4,4-dimethyl-cholesta-8,24-dienol. 4,4-dimethyl-cholesta-8,24-dienol is substrate of the C-4 demethylation complex ERG25-ERG26-ERG27 in which ERG25 catalyzes the three-step monooxygenation required for the demethylation of 4,4-dimethyl and 4alpha-methylsterols, ERG26 catalyzes the oxidative decarboxylation that results in a reduction of the 3-beta-hydroxy group at the C-3 carbon to an oxo group, and ERG27 is responsible for the reduction of the keto group on the C-3. ERG28 has a role as a scaffold to help anchor ERG25, ERG26 and ERG27 to the endoplasmic reticulum and ERG29 regulates the activity of the iron-containing C4-methylsterol oxidase ERG25. Then, the sterol 24-C-methyltransferase ERG6 catalyzes the methyl transfer from S-adenosyl-methionine to the C-24 of zymosterol to form fecosterol. The C-8 sterol isomerase ERG2 catalyzes the reaction which results in unsaturation at C-7 in the B ring of sterols and thus converts fecosterol to episterol. The sterol-C5-desaturase ERG3 then catalyzes the introduction of a C-5 double bond in the B ring to produce 5-dehydroepisterol. The C-22 sterol desaturase ERG5 further converts 5-dehydroepisterol into ergosta-5,7,22,24(28)-tetraen-3beta-ol by forming the C-22(23) double bond in the sterol side chain. Finally, ergosta-5,7,22,24(28)-tetraen-3beta-ol is substrate of the C-24(28) sterol reductase ERG4 to produce ergosterol. This chain is Squalene synthase ERG9, found in Candida albicans (Yeast).